Reading from the N-terminus, the 302-residue chain is 4-hydroxy-tetrahydrodipicolinate synthase (302 aa).

Thr-55 is a pyruvate binding site. Catalysis depends on Tyr-144, which acts as the Proton donor/acceptor. Catalysis depends on Lys-172, which acts as the Schiff-base intermediate with substrate. Position 214 (Val-214) interacts with pyruvate.

This sequence belongs to the DapA family. In terms of assembly, homotetramer; dimer of dimers.

It localises to the cytoplasm. The enzyme catalyses L-aspartate 4-semialdehyde + pyruvate = (2S,4S)-4-hydroxy-2,3,4,5-tetrahydrodipicolinate + H2O + H(+). Its pathway is amino-acid biosynthesis; L-lysine biosynthesis via DAP pathway; (S)-tetrahydrodipicolinate from L-aspartate: step 3/4. In terms of biological role, catalyzes the condensation of (S)-aspartate-beta-semialdehyde [(S)-ASA] and pyruvate to 4-hydroxy-tetrahydrodipicolinate (HTPA). In Parasynechococcus marenigrum (strain WH8102), this protein is 4-hydroxy-tetrahydrodipicolinate synthase.